The sequence spans 656 residues: ATP-dependent zinc metalloprotease FtsH (656 aa).

At 1–10 (MGDNRWLKNS) the chain is on the cytoplasmic side. Residues 11-31 (FVYLIILVAALALFFQYLGPG) form a helical membrane-spanning segment. Over 32–116 (ASQTEEKGIA…IVQPAPAWGG (85 aa)) the chain is Extracellular. Residues 117-137 (LLSIFTILLPTLLLIGFFVFF) form a helical membrane-spanning segment. Topologically, residues 138–656 (MRQAQGSNNQ…GLGGPSPLPA (519 aa)) are cytoplasmic. ATP is bound at residue 209-216 (GPPGTGKT). H432 serves as a coordination point for Zn(2+). Residue E433 is part of the active site. Zn(2+)-binding residues include H436 and D511. The span at 622 to 632 (FSKSGSTTPNG) shows a compositional bias: polar residues. Residues 622–656 (FSKSGSTTPNGRTEDRPAQPDAPQMGLGGPSPLPA) form a disordered region.

This sequence in the central section; belongs to the AAA ATPase family. It in the C-terminal section; belongs to the peptidase M41 family. Homohexamer. The cofactor is Zn(2+).

It is found in the cell membrane. Acts as a processive, ATP-dependent zinc metallopeptidase for both cytoplasmic and membrane proteins. Plays a role in the quality control of integral membrane proteins. This is ATP-dependent zinc metalloprotease FtsH from Chloroflexus aggregans (strain MD-66 / DSM 9485).